Consider the following 838-residue polypeptide: Outer membrane usher protein YraJ (838 aa).

The first 40 residues, 1–40, serve as a signal peptide directing secretion; it reads MPQRHHQGHKRTPKQLALIIKRCLPMVLTGSGMLCTTANA. Cysteine 815 and cysteine 837 are joined by a disulfide.

This sequence belongs to the fimbrial export usher family.

It is found in the cell outer membrane. Its function is as follows. Part of the yraHIJK fimbrial operon. Could contribute to adhesion to various surfaces in specific environmental niches. Increases adhesion to eukaryotic T24 bladder epithelial cells in the absence of fim operon. Probably involved in the export and assembly of fimbrial subunits across the outer membrane. The sequence is that of Outer membrane usher protein YraJ (yraJ) from Escherichia coli (strain K12).